Here is a 148-residue protein sequence, read N- to C-terminus: Lysozyme C (148 aa).

A signal peptide spans 1-18; that stretch reads MKALIILGLVLLSVMVQA. Residues 19 to 148 enclose the C-type lysozyme domain; it reads KVFERCELAR…LRQYIQGCGV (130 aa). 4 disulfide bridges follow: Cys-24-Cys-146, Cys-48-Cys-134, Cys-83-Cys-99, and Cys-95-Cys-113. Catalysis depends on residues Glu-53 and Asp-71.

Belongs to the glycosyl hydrolase 22 family. Monomer.

Its subcellular location is the secreted. The enzyme catalyses Hydrolysis of (1-&gt;4)-beta-linkages between N-acetylmuramic acid and N-acetyl-D-glucosamine residues in a peptidoglycan and between N-acetyl-D-glucosamine residues in chitodextrins.. Its function is as follows. Lysozymes have primarily a bacteriolytic function; those in tissues and body fluids are associated with the monocyte-macrophage system and enhance the activity of immunoagents. This Hylobates lar (Lar gibbon) protein is Lysozyme C (LYZ).